The following is a 188-amino-acid chain: Putative 3-methyladenine DNA glycosylase (188 aa).

It belongs to the DNA glycosylase MPG family.

This is Putative 3-methyladenine DNA glycosylase from Ehrlichia ruminantium (Cowdria ruminantium).